A 326-amino-acid polypeptide reads, in one-letter code: Vitamin B12 import system permease protein BtuC (326 aa).

9 helical membrane-spanning segments follow: residues 15-35 (WLLC…CAGE), 61-81 (LAVL…QALF), 88-108 (PGLL…VLLG), 112-132 (LPNW…TLIL), 146-166 (LLAG…AIYF), 184-204 (GGVD…LLWI), 240-260 (GWMV…GLVI), 274-294 (VLLP…DIVA), and 302-322 (ELPI…WLLL).

This sequence belongs to the binding-protein-dependent transport system permease family. FecCD subfamily. In terms of assembly, the complex is composed of two ATP-binding proteins (BtuD), two transmembrane proteins (BtuC) and a solute-binding protein (BtuF).

It is found in the cell inner membrane. Part of the ABC transporter complex BtuCDF involved in vitamin B12 import. Involved in the translocation of the substrate across the membrane. This is Vitamin B12 import system permease protein BtuC from Escherichia coli O9:H4 (strain HS).